A 422-amino-acid chain; its full sequence is Tyrosine-protein kinase STYK1 (422 aa).

A helical membrane pass occupies residues 26–46 (VIIVPTLLVTIFLILLGVILW). Residues 114–384 (SEVLEQICSG…ELRLRLEAAI (271 aa)) form the Protein kinase domain. ATP is bound by residues 120 to 128 (ICSGSCGPI) and lysine 147. The active-site Proton acceptor is the aspartate 251.

This sequence belongs to the protein kinase superfamily. Tyr protein kinase family. As to expression, widely expressed. Highly expressed in brain, placenta and prostate. Expressed in tumor cells such as hepatoma cells L-02, cervix carcinoma cells HeLa, ovary cancer cells Ho8910 and chronic myelogenous leukemia cells K-562, but not in other tumor cells such as epidermoid carcinoma (A-431). Undetectable in most normal lung tissues, widely expressed in lung cancers.

Its subcellular location is the membrane. It catalyses the reaction L-tyrosyl-[protein] + ATP = O-phospho-L-tyrosyl-[protein] + ADP + H(+). Probable tyrosine protein-kinase, which has strong transforming capabilities on a variety of cell lines. When overexpressed, it can also induce tumor cell invasion as well as metastasis in distant organs. May act by activating both MAP kinase and phosphatidylinositol 3'-kinases (PI3K) pathways. The polypeptide is Tyrosine-protein kinase STYK1 (STYK1) (Homo sapiens (Human)).